A 462-amino-acid chain; its full sequence is WD repeat-containing protein WRAP73 (462 aa).

4 WD repeats span residues 46–86 (TCLD…WHCK), 89–129 (EGSA…VSYI), 176–210 (TDTQ…YSLD), and 221–260 (EWSL…MITE). S281 carries the post-translational modification Phosphoserine. 2 WD repeats span residues 328–369 (NPRM…LFVV) and 371–410 (EHMS…SVQV).

As to quaternary structure, interacts with SSX2IP. As to expression, ubiquitous.

It is found in the cytoplasm. The protein resides in the cytoskeleton. The protein localises to the microtubule organizing center. It localises to the centrosome. In terms of biological role, the SSX2IP:WRAP73 complex is proposed to act as regulator of spindle anchoring at the mitotic centrosome. Required for the centrosomal localization of SSX2IP and normal mitotic bipolar spindle morphology. Required for the targeting of centriole satellite proteins to centrosomes such as of PCM1, SSX2IP, CEP290 and PIBF1/CEP90. Required for ciliogenesis and involved in the removal of the CEP97:CCP110 complex from the mother centriole. Involved in ciliary vesicle formation at the mother centriole and required for the docking of vesicles to the basal body during ciliogenesis; may promote docking of RAB8A- and ARL13B-containing vesicles. The chain is WD repeat-containing protein WRAP73 (Wrap73) from Mus musculus (Mouse).